The primary structure comprises 207 residues: Succinyl-CoA:3-ketoacid coenzyme A transferase subunit B (207 aa).

The active site involves Glu-43.

Belongs to the 3-oxoacid CoA-transferase subunit B family. As to quaternary structure, heterodimer of a subunit A and a subunit B.

It carries out the reaction a 3-oxo acid + succinyl-CoA = a 3-oxoacyl-CoA + succinate. In Helicobacter pylori (strain ATCC 700392 / 26695) (Campylobacter pylori), this protein is Succinyl-CoA:3-ketoacid coenzyme A transferase subunit B (scoB).